Reading from the N-terminus, the 161-residue chain is MTNGNGTPPEAAPAPQLNVLAQYTKDLSFENPNAPSSLQQQGQPPQINIQINVGANNLSEQEFEVTLSVEGKAETAGKVMFSFELAYAGVFRIVNVPKENLHPLVMIECPRLLFPFAREIIATAVRDGGFPPLMLDPVDFVGLYRQNMERQMAAGGQAGQA.

Belongs to the SecB family. In terms of assembly, homotetramer, a dimer of dimers. One homotetramer interacts with 1 SecA dimer.

It is found in the cytoplasm. Functionally, one of the proteins required for the normal export of preproteins out of the cell cytoplasm. It is a molecular chaperone that binds to a subset of precursor proteins, maintaining them in a translocation-competent state. It also specifically binds to its receptor SecA. The protein is Protein-export protein SecB of Bradyrhizobium diazoefficiens (strain JCM 10833 / BCRC 13528 / IAM 13628 / NBRC 14792 / USDA 110).